We begin with the raw amino-acid sequence, 551 residues long: MRSDVIKKGIERAPHRSLFKAMGFTDEELERPLIGVANSFNELIPGHIHLRKIAEAVKAGIRMAGGTPLEFNTIGICDGIAMNHLGMKYSLPSRELIADSVELVARVYHFDGIVVIASCDKIIPGMLMAIARLNIPAIFVSGGPMLPGRFKGEYVDVKTVFEAVGAVKAGKMSYEELKLLENFACPGCGSCAGMFTANTMNALTEALGISLPWNGTAPAPYAHRIRIAKETGMQIVKLVEKDVKARDILTREAFEDAIAVDMALGGSTNTVLHLMAIANEAKVDLSLEDFDRISEKTPTLAKLSPAGKHFVVDLYEAGGILGVMKRLSELGLIHEDRLTVSLKTVGELLKSAFVSRDDVIRPVTNPYHPRGGIMILRGTLAPNGAVIKVSAVEGVEVFEGPAKVFDSEEEATAAILSGKIERGDVVVIRYEGPKGGPGMREMLTPTSAIAGMGLDKDVALVTDGRFSGATRGLSVGHVSPEAAEGGPIALVKDGDIIRIDLKNKRIDLLVDEEELRKRREEWKPKVKELTGYLKRYSTLVTSANTGAILRH.

Aspartate 78 is a Mg(2+) binding site. Residue cysteine 119 participates in [2Fe-2S] cluster binding. Residues aspartate 120 and lysine 121 each contribute to the Mg(2+) site. Lysine 121 carries the post-translational modification N6-carboxylysine. Cysteine 191 is a [2Fe-2S] cluster binding site. Glutamate 441 contributes to the Mg(2+) binding site. The active-site Proton acceptor is serine 467.

This sequence belongs to the IlvD/Edd family. As to quaternary structure, homodimer. Requires [2Fe-2S] cluster as cofactor. It depends on Mg(2+) as a cofactor.

It catalyses the reaction (2R)-2,3-dihydroxy-3-methylbutanoate = 3-methyl-2-oxobutanoate + H2O. The enzyme catalyses (2R,3R)-2,3-dihydroxy-3-methylpentanoate = (S)-3-methyl-2-oxopentanoate + H2O. Its pathway is amino-acid biosynthesis; L-isoleucine biosynthesis; L-isoleucine from 2-oxobutanoate: step 3/4. The protein operates within amino-acid biosynthesis; L-valine biosynthesis; L-valine from pyruvate: step 3/4. Functions in the biosynthesis of branched-chain amino acids. Catalyzes the dehydration of (2R,3R)-2,3-dihydroxy-3-methylpentanoate (2,3-dihydroxy-3-methylvalerate) into 2-oxo-3-methylpentanoate (2-oxo-3-methylvalerate) and of (2R)-2,3-dihydroxy-3-methylbutanoate (2,3-dihydroxyisovalerate) into 2-oxo-3-methylbutanoate (2-oxoisovalerate), the penultimate precursor to L-isoleucine and L-valine, respectively. The polypeptide is Dihydroxy-acid dehydratase (Pyrococcus furiosus (strain ATCC 43587 / DSM 3638 / JCM 8422 / Vc1)).